The primary structure comprises 491 residues: MATFKDACYHYKKLNKLNSLVLKLGANDEWRPAPVTKYKGWCLDCCQYTNLTYCRGCALYHVCQWCSQYNRCFLDEEPHLLRMRTFKDVITKEDIEGLLTMYEILFPINEKLVNKFINSVKQRKCRTEYLLEWYNHLLMPITLQALTIKLEDSTYYIFGYYDCMEHENQTPFQFINLLEKYDKLLLDDRNFNRMLHLPTILQQEYALRYFSKSRFLSKGKKRLNRNDFSDNLVEDRHSPTSLIQVVRNCISTHPNDYEWNKACTFVVDARNYINIMNSSYTEHYSVSQRCKLFTKYKFGIISKLVKPNYIFSSHESCALNVHNCRWCQINSHYKVWEDFRLKKIYNNVMDFIRALVKSNGNVGQCSSQESVYKCIPDIFLICKMEKWNEAVEVLFNYLEPVDINGTEYVLLDYEVNWEVRGLVMQSMDGKVPRILNINDTKKILSTIIFDWFDVRYMRETPMTTSTTNQLRTLNKRNELIDEYDLELSDVE.

The interval 1-81 (MATFKDACYH…CFLDEEPHLL (81 aa)) is RNA-binding. Residues 42–79 (CLDCCQYTNLTYCRGCALYHVCQWCSQYNRCFLDEEPH) are zinc-binding domain. An important for cytoskeleton localization region spans residues 82–176 (RMRTFKDVIT…ENQTPFQFIN (95 aa)). The tract at residues 320-491 (NVHNCRWCQI…EYDLELSDVE (172 aa)) is interaction with host IRF3. The pLxIS motif motif lies at 485–488 (LELS).

It belongs to the rotavirus NSP1 family. Interacts (via C-terminus) with host IRF3; this interaction leads to IRF3 degradation. Interacts with host IRF7; this interaction leads to IRF7 degradation. Interacts with host CUL1 and CUL3.

The protein resides in the host cytoplasm. It is found in the host cytoskeleton. Functionally, plays a role in the inhibition of host innate immunity by inducing the degradation of key host factors required to activate interferon production such as IRF3, IRF5 or IRF7. Associates with components of cullin RING ligases (CRLs) including CUL1 or CUL3, which are essential multisubunit ubiquitination complexes, to modulate their activities. The sequence is that of Non-structural protein 1 from Bos taurus (Bovine).